A 309-amino-acid chain; its full sequence is Homoserine O-succinyltransferase (309 aa).

Cys142 (acyl-thioester intermediate) is an active-site residue. 2 residues coordinate substrate: Lys163 and Ser192. His235 serves as the catalytic Proton acceptor. Residue Glu237 is part of the active site. Substrate is bound at residue Arg249.

This sequence belongs to the MetA family.

Its subcellular location is the cytoplasm. It carries out the reaction L-homoserine + succinyl-CoA = O-succinyl-L-homoserine + CoA. It participates in amino-acid biosynthesis; L-methionine biosynthesis via de novo pathway; O-succinyl-L-homoserine from L-homoserine: step 1/1. Its function is as follows. Transfers a succinyl group from succinyl-CoA to L-homoserine, forming succinyl-L-homoserine. This is Homoserine O-succinyltransferase from Cronobacter sakazakii (strain ATCC BAA-894) (Enterobacter sakazakii).